The sequence spans 110 residues: Large ribosomal subunit protein uL22 (110 aa).

The protein belongs to the universal ribosomal protein uL22 family. Part of the 50S ribosomal subunit.

In terms of biological role, this protein binds specifically to 23S rRNA; its binding is stimulated by other ribosomal proteins, e.g. L4, L17, and L20. It is important during the early stages of 50S assembly. It makes multiple contacts with different domains of the 23S rRNA in the assembled 50S subunit and ribosome. Functionally, the globular domain of the protein is located near the polypeptide exit tunnel on the outside of the subunit, while an extended beta-hairpin is found that lines the wall of the exit tunnel in the center of the 70S ribosome. In Histophilus somni (strain 2336) (Haemophilus somnus), this protein is Large ribosomal subunit protein uL22.